The following is a 337-amino-acid chain: Hsp90 co-chaperone Cdc37-like 1 (337 aa).

Over residues 1 to 11 (MEQPWPPPGPW) the composition is skewed to pro residues. The segment at 1 to 40 (MEQPWPPPGPWSLPRAEGEAEEESDFDVFPSSPRCPQLPG) is disordered. Positions 2 to 171 (EQPWPPPGPW…YEQKIRHFGM (170 aa)) are self-association. A phosphoserine mark is found at Ser-32 and Ser-88. The stretch at 84-122 (HNSESLDQEHAKAQTAVSELRQREEEWRQKEEALVQREK) forms a coiled coil. The self-association and interaction with Hsp90 stretch occupies residues 147–277 (KDTEDEDKSE…SRVRLYSQSQ (131 aa)). Residues 267-337 (KSRVRLYSQS…DDEPKMMDTV (71 aa)) are interaction with Hsp70. The tract at residues 278–337 (SFQPMTVQNHVPHSGVGSIGLLESLPQNPDYLQYSISTALCSLNSVVHKEDDEPKMMDTV) is required for interaction with STIP1.

It belongs to the CDC37 family. As to quaternary structure, self-associates. Forms complexes with Hsp70 and Hsp90. Interacts with CDC37, FKBP4, PPID and STIP1. Expressed in brain, heart, kidney, liver, placenta and skeletal muscle.

It localises to the cytoplasm. Its function is as follows. Co-chaperone that binds to numerous proteins and promotes their interaction with Hsp70 and Hsp90. The polypeptide is Hsp90 co-chaperone Cdc37-like 1 (CDC37L1) (Homo sapiens (Human)).